Here is a 345-residue protein sequence, read N- to C-terminus: Nuclear distribution protein nudE-like 1 (345 aa).

Positions lysine 27–valine 190 form a coiled coil. Residues valine 56 to serine 166 form a self-association region. An interaction with KATNB1 region spans residues aspartate 64–glutamate 189. The tract at residues tyrosine 114–isoleucine 133 is required for interaction with PAFAH1B1. The segment at arginine 175–valine 345 is interaction with CENPF. The segment at glutamate 189–valine 256 is interaction with YWHAE. Residues threonine 191–valine 345 are interaction with NEFL. The interval alanine 195 to valine 256 is interaction with KATNA1. Phosphoserine is present on serine 215. A disordered region spans residues proline 217–glycine 240. Position 219 is a phosphothreonine; by CDK1 and MAPK1 (threonine 219). Residues asparagine 227–lysine 278 are interaction with DISC1. A Phosphoserine modification is found at serine 231. Serine 242 carries the post-translational modification Phosphoserine; by CDK1. Position 245 is a phosphothreonine; by CDK1 and MAPK1 (threonine 245). Residues valine 256 to valine 291 form a required for localization to the centrosome and interaction with dynein, dynactin, tubulin gamma, PCM1 and PCNT region. Cysteine 273 carries S-palmitoyl cysteine; by ZDHHC2, ZDHHC3 and ZDHHC7 lipidation. Positions alanine 316–valine 345 are disordered. The segment covering leucine 329–glycine 339 has biased composition (low complexity). Serine 344 carries the phosphoserine modification.

Belongs to the nudE family. In terms of assembly, self-associates. Interacts with DISC1, dynein, dynactin, tubulin gamma, KATNA1, KATNB1, microtubules, PAFAH1B1, PCM1, PCNT, and YWHAE. Interacts directly with NEFL and indirectly with NEFH. Interacts (via C-terminus) with CENPF. Interacts with ZNF365. Interacts with PLEKHM1 (via N- and C-terminus). Interacts with GTP-bound RAB9A; the interaction may lead to RAB9A-dynein motor tethering. In terms of processing, phosphorylated in mitosis. Can be phosphorylated by CDK1, CDK5 and MAPK1. Phosphorylation by CDK5 promotes interaction with KATNA1 and YWHAE. Post-translationally, palmitoylation at Cys-273 reduces affinity for dynein. In terms of tissue distribution, expressed at low levels in heart, hypothalamus, liver, lung, spleen and stomach. Expressed at higher levels in testis and brain. Within the brain, expressed in cerebellum, cerebral stem, cortex and striatum.

It is found in the cytoplasm. The protein localises to the cytoskeleton. It localises to the microtubule organizing center. The protein resides in the centrosome. Its subcellular location is the chromosome. It is found in the centromere. The protein localises to the kinetochore. It localises to the spindle. Required for organization of the cellular microtubule array and microtubule anchoring at the centrosome. May regulate microtubule organization at least in part by targeting the microtubule severing protein KATNA1 to the centrosome. Also positively regulates the activity of the minus-end directed microtubule motor protein dynein. May enhance dynein-mediated microtubule sliding by targeting dynein to the microtubule plus ends. Required for several dynein- and microtubule-dependent processes such as the maintenance of Golgi integrity, the centripetal motion of secretory vesicles and the coupling of the nucleus and centrosome. Also required during brain development for the migration of newly formed neurons from the ventricular/subventricular zone toward the cortical plate. Plays a role, together with DISC1, in the regulation of neurite outgrowth. Required for mitosis in some cell types but appears to be dispensible for mitosis in cortical neuronal progenitors, which instead requires NDE1. Facilitates the polymerization of neurofilaments from the individual subunits NEFH and NEFL. Positively regulates lysosome peripheral distribution and ruffled border formation in osteoclasts. Plays a role, together with DISC1, in the regulation of neurite outgrowth. May act as a RAB9A/B effector that tethers RAB9-associated late endosomes to the dynein motor for their retrograde transport to the trans-Golgi network. The chain is Nuclear distribution protein nudE-like 1 (NDEL1) from Oryctolagus cuniculus (Rabbit).